Consider the following 348-residue polypeptide: Sensor protein VraS (348 aa).

The next 2 helical transmembrane spans lie at 13 to 33 (ILVYSMLTAFLFIDKVFVNII) and 43 to 63 (IFGIPVFLFLNLVIILLCIIV). The region spanning 150-341 (RLARELHDSV…RIEVKAPLNR (192 aa)) is the Histidine kinase domain.

It localises to the cell membrane. It carries out the reaction ATP + protein L-histidine = ADP + protein N-phospho-L-histidine.. Functionally, member of the two-component regulatory system VraS/VraR involved in the control of the cell wall peptidoglycan biosynthesis. Probably activates VraR by phosphorylation. The protein is Sensor protein VraS (vraS) of Staphylococcus haemolyticus (strain JCSC1435).